The primary structure comprises 446 residues: Scytalone dehydratase-like protein Arp1 (446 aa).

Position 323 (tyrosine 323) interacts with substrate. Catalysis depends on residues histidine 358 and histidine 383. Asparagine 404 is a binding site for substrate.

The protein belongs to the scytalone dehydratase family. In terms of assembly, homotrimer. Each subunit contains an active site, located in the central part of the hydrophobic core of the monomer, which functions independently.

Scytalone dehydratase-like protein; part of the Pks2 gene cluster that mediates the formation of infectious structures (appressoria), enabling these fungi to kill insects faster. The product of the Pks2 gene cluster is different from the one of Pks1 and has still not been identified. This is Scytalone dehydratase-like protein Arp1 from Metarhizium acridum (strain CQMa 102).